Here is a 180-residue protein sequence, read N- to C-terminus: Acireductone dioxygenase (180 aa).

The Fe(2+) site is built by His99, His101, Glu105, and His145. Residues His99, His101, Glu105, and His145 each contribute to the Ni(2+) site.

Belongs to the acireductone dioxygenase (ARD) family. Monomer. Requires Fe(2+) as cofactor. Ni(2+) is required as a cofactor.

It carries out the reaction 1,2-dihydroxy-5-(methylsulfanyl)pent-1-en-3-one + O2 = 3-(methylsulfanyl)propanoate + CO + formate + 2 H(+). The enzyme catalyses 1,2-dihydroxy-5-(methylsulfanyl)pent-1-en-3-one + O2 = 4-methylsulfanyl-2-oxobutanoate + formate + 2 H(+). It participates in amino-acid biosynthesis; L-methionine biosynthesis via salvage pathway; L-methionine from S-methyl-5-thio-alpha-D-ribose 1-phosphate: step 5/6. Functionally, catalyzes 2 different reactions between oxygen and the acireductone 1,2-dihydroxy-3-keto-5-methylthiopentene (DHK-MTPene) depending upon the metal bound in the active site. Fe-containing acireductone dioxygenase (Fe-ARD) produces formate and 2-keto-4-methylthiobutyrate (KMTB), the alpha-ketoacid precursor of methionine in the methionine recycle pathway. Ni-containing acireductone dioxygenase (Ni-ARD) produces methylthiopropionate, carbon monoxide and formate, and does not lie on the methionine recycle pathway. This Geobacillus kaustophilus (strain HTA426) protein is Acireductone dioxygenase.